We begin with the raw amino-acid sequence, 220 residues long: Guanylate kinase (220 aa).

One can recognise a Guanylate kinase-like domain in the interval 15–194; it reads GLMLVISSPS…AFEGIEAIVK (180 aa). Residue 22–29 participates in ATP binding; that stretch reads SPSGAGKS.

The protein belongs to the guanylate kinase family.

Its subcellular location is the cytoplasm. It catalyses the reaction GMP + ATP = GDP + ADP. Essential for recycling GMP and indirectly, cGMP. This chain is Guanylate kinase, found in Agrobacterium fabrum (strain C58 / ATCC 33970) (Agrobacterium tumefaciens (strain C58)).